The sequence spans 295 residues: Aquaporin-9 (295 aa).

The Cytoplasmic portion of the chain corresponds to 1 to 24; the sequence is MPSEKDRAKKNLVQRLALKSCLAK. Residues 25–43 form a helical membrane-spanning segment; sequence ETLSEFLGTFIMIVLGCGS. Topologically, residues 44–57 are extracellular; the sequence is IAQAVLSREKAGGI. A helical transmembrane segment spans residues 58–77; sequence ITINIGFATAVVMALYATFG. Residues 78-79 lie on the Cytoplasmic side of the membrane; sequence VS. Positions 80–92 form an intramembrane region, discontinuously helical; that stretch reads GGHINPAVSFAMC. The short motif at 84–86 is the NPA 1 element; it reads NPA. Topologically, residues 93 to 98 are cytoplasmic; sequence TFGRME. A helical transmembrane segment spans residues 99–123; that stretch reads WFKFPFYVGAQLLGAFVGAATVFGI. At 124–160 the chain is on the extracellular side; sequence YYDGLMAFADGKLLITGENGTAFIFATYPKPFVSVPG. Residues 161–178 form a helical membrane-spanning segment; sequence AFVDQVVSTMFLLLIVFA. The Cytoplasmic portion of the chain corresponds to 179 to 190; it reads IFDSRNLGVPRG. A helical transmembrane segment spans residues 191–207; it reads LEPIVIGLLIIVISCSL. At 208–210 the chain is on the extracellular side; the sequence is GLN. The segment at residues 211–225 is an intramembrane region (discontinuously helical); sequence SGCAMNPARDLSPRL. Positions 216–218 match the NPA 2 motif; the sequence is NPA. Over 226–243 the chain is Extracellular; sequence FTALAGWGFEVFTFGNNF. The chain crosses the membrane as a helical span at residues 244-264; the sequence is WWIPVVGPMIGAVLGGLIYVL. Topologically, residues 265 to 295 are cytoplasmic; it reads FIQMHHSNPDPEVKAEPAENNLEKHELSVIM.

Belongs to the MIP/aquaporin (TC 1.A.8) family. In terms of assembly, homotetramer; each monomer provides an independent glycerol/water pore.

It is found in the cell membrane. The protein localises to the basolateral cell membrane. The catalysed reaction is glycerol(in) = glycerol(out). It carries out the reaction H2O(in) = H2O(out). The enzyme catalyses urea(in) = urea(out). It catalyses the reaction (S)-lactate(in) = (S)-lactate(out). The catalysed reaction is NH4(+)(in) = NH4(+)(out). It carries out the reaction uracil(in) = uracil(out). The enzyme catalyses adenine(out) = adenine(in). It catalyses the reaction 3-hydroxybutanoate(in) = 3-hydroxybutanoate(out). The catalysed reaction is D-sorbitol(in) = D-sorbitol(out). It carries out the reaction D-mannitol(in) = D-mannitol(out). The enzyme catalyses H2O2(out) = H2O2(in). It catalyses the reaction arsenite(in) = arsenite(out). The catalysed reaction is selenite(in) = selenite(out). Its function is as follows. Aquaglyceroporins form homotetrameric transmembrane channels, with each monomer independently mediating glycerol and water transport across the plasma membrane along their osmotic gradient. AQP9 is the primary route for glycerol uptake in hepatocytes, supporting hepatic gluconeogenesis. It exhibits broad specificity and may transport various small, non-charged solutes, including carbamides, polyols, purines, and pyrimidines. AQP9 may also facilitate hepatic urea extrusion. Due to its permeability to lactate, AQP9 might participate in the astrocyte-to-neuron lactate shuttle, supplying neurons with energy. Additionally, AQP9 is permeable to arsenite, contributing to arsenic excretion by the liver and providing partial protection against arsenic toxicity. It is also permeable to H2O2 in vivo. Could also be permeable to ammonium. The chain is Aquaporin-9 from Mus musculus (Mouse).